We begin with the raw amino-acid sequence, 767 residues long: Polyribonucleotide nucleotidyltransferase (767 aa).

Asp-509 and Asp-515 together coordinate Mg(2+). Residues 575–634 enclose the KH domain; the sequence is PRILTVKVPIDKIGEVIGPKGKMINSIQDETGAEITIEDDGTIYIGATDGPSAEAARDAI. The 73-residue stretch at 646-718 folds into the S1 motif domain; that stretch reads GERYLGTVVK…ERGKLSLVPV (73 aa). The interval 725–767 is disordered; the sequence is AVAAPNGGESPNGAKKTDASGNGAKQPRRRRRTRSSSRSSENT. The segment covering 750 to 759 has biased composition (basic residues); that stretch reads QPRRRRRTRS.

It belongs to the polyribonucleotide nucleotidyltransferase family. Requires Mg(2+) as cofactor.

The protein resides in the cytoplasm. It carries out the reaction RNA(n+1) + phosphate = RNA(n) + a ribonucleoside 5'-diphosphate. Its function is as follows. Involved in mRNA degradation. Catalyzes the phosphorolysis of single-stranded polyribonucleotides processively in the 3'- to 5'-direction. This Thermobifida fusca (strain YX) protein is Polyribonucleotide nucleotidyltransferase.